Reading from the N-terminus, the 650-residue chain is MQKSLITTPIYYVNDIPHIGHAYTTLIADTLKKYYTLQGEEVFFLTGTDEHGQKIEQSARLRNQSPKAYADSISTIFKDQWDFFNLDYDGFIRTTDSEHQKCVQNAFEIMFEKGDIYKGAYSGYYCVSCESYCAISKADNTNDKVLCPDCLRETTLLEEESYFFRLSAYEKPLLDFYAKNPEAILPVYRKNEVTSFIEQGLLDLSITRTSFEWGIPLPKKMNDPKHVVYVWLDALLNYASALGYLNDLDNKMAHFECARHIVGKDILRFHAIYWPAFLMSLNLPLFKQLCVHGWWTIEGVKMSKSLGNVLDAQKIAMEYGIEELRYFLLREVPFGQDGDFSKKALIERINANLNNDLGNLLNRLLGMAKKYFNHSLKSTKITAYYSKELEKVHQILDNANSFVPKMQLHKALEELFNVYDFLNKLIAKEEPWVLHKNNESEKLEALLSLIANALLQSSFLLYAFMPKSAVKLANAFNTEITPDNYERFFKAKKLQDMILQDTEPLFSKMEKIEKTEKAGEASPEKNEKEKKDAKEKAPLKQENYIGIEDFKKVEIKVGLIKEAQRIEKSNKLLRLKVDLGEGRLRQIISGIALDYEPESLVGQMVCVVANLKPAKLMGEMSEGMILAVRDSDNLALISPTREKIAGSLIS.

Residues 11–21 (YYVNDIPHIGH) carry the 'HIGH' region motif. Residues cysteine 126, cysteine 129, cysteine 147, and cysteine 150 each coordinate Zn(2+). The short motif at 301-305 (KMSKS) is the 'KMSKS' region element. An ATP-binding site is contributed by lysine 304. The interval 513-535 (EKTEKAGEASPEKNEKEKKDAKE) is disordered. In terms of domain architecture, tRNA-binding spans 549–650 (DFKKVEIKVG…REKIAGSLIS (102 aa)).

This sequence belongs to the class-I aminoacyl-tRNA synthetase family. MetG type 2A subfamily. In terms of assembly, homodimer. The cofactor is Zn(2+).

The protein localises to the cytoplasm. It catalyses the reaction tRNA(Met) + L-methionine + ATP = L-methionyl-tRNA(Met) + AMP + diphosphate. In terms of biological role, is required not only for elongation of protein synthesis but also for the initiation of all mRNA translation through initiator tRNA(fMet) aminoacylation. In Helicobacter pylori (strain ATCC 700392 / 26695) (Campylobacter pylori), this protein is Methionine--tRNA ligase (metG).